The sequence spans 142 residues: Large ribosomal subunit protein bL17 (142 aa).

The protein belongs to the bacterial ribosomal protein bL17 family. In terms of assembly, part of the 50S ribosomal subunit. Contacts protein L32.

The protein is Large ribosomal subunit protein bL17 of Protochlamydia amoebophila (strain UWE25).